The primary structure comprises 387 residues: Protein SGT1 homolog (387 aa).

TPR repeat units follow at residues M1 to A34, A36 to N67, and S68 to N101. Disordered stretches follow at residues K110–G193 and S299–L323. A compositionally biased stretch (low complexity) spans N118–P127. Pro residues predominate over residues T128 to Q138. A compositionally biased stretch (low complexity) spans P139–T185. In terms of domain architecture, CS spans G193 to E282. The region spanning A301–K387 is the SGS domain. The span at S308–L323 shows a compositional bias: basic and acidic residues.

The protein belongs to the SGT1 family.

May play a role in ubiquitination and subsequent proteasomal degradation of target proteins. In Dictyostelium discoideum (Social amoeba), this protein is Protein SGT1 homolog (sugt1).